The primary structure comprises 502 residues: Mannitol 2-dehydrogenase (502 aa).

37–48 (IVHIGVGGFHRA) lines the NAD(+) pocket.

The protein belongs to the mannitol dehydrogenase family. As to quaternary structure, monomer.

It carries out the reaction D-mannitol + NAD(+) = D-fructose + NADH + H(+). Functionally, catalyzes the NAD(H)-dependent interconversion of D-fructose and D-mannitol in the mannitol metabolic pathway. The chain is Mannitol 2-dehydrogenase from Neosartorya fischeri (strain ATCC 1020 / DSM 3700 / CBS 544.65 / FGSC A1164 / JCM 1740 / NRRL 181 / WB 181) (Aspergillus fischerianus).